A 566-amino-acid chain; its full sequence is Sulfite reductase [NADPH] hemoprotein beta-component (566 aa).

Residues Cys-430, Cys-436, Cys-475, and Cys-479 each coordinate [4Fe-4S] cluster. Cys-479 lines the siroheme pocket.

It belongs to the nitrite and sulfite reductase 4Fe-4S domain family. In terms of assembly, alpha(8)-beta(8). The alpha component is a flavoprotein, the beta component is a hemoprotein. Siroheme is required as a cofactor. It depends on [4Fe-4S] cluster as a cofactor.

The enzyme catalyses hydrogen sulfide + 3 NADP(+) + 3 H2O = sulfite + 3 NADPH + 4 H(+). It participates in sulfur metabolism; hydrogen sulfide biosynthesis; hydrogen sulfide from sulfite (NADPH route): step 1/1. In terms of biological role, component of the sulfite reductase complex that catalyzes the 6-electron reduction of sulfite to sulfide. This is one of several activities required for the biosynthesis of L-cysteine from sulfate. The polypeptide is Sulfite reductase [NADPH] hemoprotein beta-component (Baumannia cicadellinicola subsp. Homalodisca coagulata).